The following is a 428-amino-acid chain: MKKQNLRSMAASAIEKVVEQGQSLSNILPPLQQKVSDKDKALLQELCFGVLRTLPQQEWLISKLMSRPMTGKQRTIHYLIMVGFYQLLHTRIPPHAALAETVEGAVVIKRPQLKGLINGVLRQFQRQQEELLAEFADSDKRFLHPEWLLKRLQKAYPSKWEAIVEANNQRPPMWLRVNRNHHTRDEWLALLETAEMNGFTHDAYPDAIRLASPAPVQALPGFEQGWVTVQDASAQGCMTYLEPQNGDHILDLCAAPGGKTTHILEIAPKASVMAVDVDEQRLSRVYDNLKRLGMKAEVKQGDGRTPGEWCGDEQFDRILVDAPCSATGVIRRHPDIKWLRRDRDINELAQLQSEILDAVWPHLKPGGTLVYATCSVLPEENSQQIAAFLKRTSNATLRTTGTPDKPGVQNLPGAEDGDGFFYAKLIKE.

S-adenosyl-L-methionine contacts are provided by residues 253–259 (CAAPGGK), aspartate 276, aspartate 302, and aspartate 321. Cysteine 374 (nucleophile) is an active-site residue.

Belongs to the class I-like SAM-binding methyltransferase superfamily. RsmB/NOP family.

It localises to the cytoplasm. It catalyses the reaction cytidine(967) in 16S rRNA + S-adenosyl-L-methionine = 5-methylcytidine(967) in 16S rRNA + S-adenosyl-L-homocysteine + H(+). In terms of biological role, specifically methylates the cytosine at position 967 (m5C967) of 16S rRNA. This is Ribosomal RNA small subunit methyltransferase B from Enterobacter sp. (strain 638).